A 261-amino-acid polypeptide reads, in one-letter code: tRNA pseudouridine synthase A (261 aa).

Asp51 (nucleophile) is an active-site residue. Tyr109 contacts substrate.

Belongs to the tRNA pseudouridine synthase TruA family. Homodimer.

It catalyses the reaction uridine(38/39/40) in tRNA = pseudouridine(38/39/40) in tRNA. Its function is as follows. Formation of pseudouridine at positions 38, 39 and 40 in the anticodon stem and loop of transfer RNAs. This chain is tRNA pseudouridine synthase A, found in Shewanella sp. (strain ANA-3).